We begin with the raw amino-acid sequence, 366 residues long: uncharacterized protein (366 aa).

Glutamate 139 (proton donor) is an active-site residue. Glutamate 249 serves as the catalytic Nucleophile.

It belongs to the glycosyl hydrolase 53 family.

This is an uncharacterized protein from Niallia circulans (Bacillus circulans).